The following is a 314-amino-acid chain: Deoxymugineic acid synthase 1 (314 aa).

The interval 1 to 21 (MGAGDRTVAGMPRIGMGTAVQ) is disordered. Asp44 contributes to the NADP(+) binding site. Tyr49 functions as the Proton donor in the catalytic mechanism. His112 contacts substrate. NADP(+)-binding positions include 158–159 (AN), Gln180, 258–266 (FDEARMREN), and 273–281 (ELTEEERRR).

This sequence belongs to the aldo/keto reductase family.

It catalyses the reaction 2'-deoxymugineate + NAD(+) = 3''-deamino-3''-oxonicotianamine + NADH + H(+). The enzyme catalyses 2'-deoxymugineate + NADP(+) = 3''-deamino-3''-oxonicotianamine + NADPH + H(+). The protein operates within siderophore biosynthesis. Functionally, catalyzes the reduction of a 3''-keto intermediate during the biosynthesis of 2'-deoxymugineic acid (DMA) from L-Met. Involved in the formation of phytosiderophores (MAs) belonging to the mugineic acid family and required to acquire iron. This chain is Deoxymugineic acid synthase 1, found in Hordeum vulgare (Barley).